Here is a 304-residue protein sequence, read N- to C-terminus: 6-dehydroglucose reductase (304 aa).

Trp28, Arg29, and Asp56 together coordinate NADP(+). The Proton donor role is filled by Tyr61. Residues Tyr61, His133, and Arg134 each coordinate D-glucose. Positions 163, 164, 185, 215, 217, 219, 268, 269, 270, and 274 each coordinate NADP(+).

Belongs to the aldo/keto reductase family.

It carries out the reaction D-glucose + NADP(+) = 6-dehydro-D-glucose + NADPH + H(+). Its function is as follows. Part of the alkanesulfonate monooxygenase (sulfo-ASMO) pathway, a D-sulfoquinovose degradation pathway that enables the complete utilization of all carbons within sulfoquinovose (SQ) with concomitant production of inorganic sulfite. Catalyzes the NADP-dependent reduction of 6-dehydro-D-glucose to D-glucose. Can also catalyze the reversible reaction, the formation of 6-dehydro-D-glucose from D-glucose in the presence of NADP(+). The polypeptide is 6-dehydroglucose reductase (Novosphingobium aromaticivorans (strain ATCC 700278 / DSM 12444 / CCUG 56034 / CIP 105152 / NBRC 16084 / F199)).